Consider the following 138-residue polypeptide: MPTIQQLVRKGRATFLKKGKAPALDSCPQKRGVCVRVYTTTPKKPNSAMRKVARVRLTNSKEVNVYIPGEGHNLQEHSIVLVRGGRVKDLPGVRYHIVRGALDTAGVSGRMQRRSKYGAKFPKTGTGKTKAVPTKNKK.

Residue aspartate 89 is modified to 3-methylthioaspartic acid. Residues 107 to 138 form a disordered region; the sequence is VSGRMQRRSKYGAKFPKTGTGKTKAVPTKNKK.

Belongs to the universal ribosomal protein uS12 family. As to quaternary structure, part of the 30S ribosomal subunit. Contacts proteins S8 and S17. May interact with IF1 in the 30S initiation complex.

Functionally, with S4 and S5 plays an important role in translational accuracy. In terms of biological role, interacts with and stabilizes bases of the 16S rRNA that are involved in tRNA selection in the A site and with the mRNA backbone. Located at the interface of the 30S and 50S subunits, it traverses the body of the 30S subunit contacting proteins on the other side and probably holding the rRNA structure together. The combined cluster of proteins S8, S12 and S17 appears to hold together the shoulder and platform of the 30S subunit. In Azobacteroides pseudotrichonymphae genomovar. CFP2, this protein is Small ribosomal subunit protein uS12.